We begin with the raw amino-acid sequence, 2352 residues long: Cell wall alpha-1,3-glucan synthase mok12 (2352 aa).

Residues 1786–1813 (SNDFGIREVPLSDANQSSQADSTSIDRY) form a disordered region. Polar residues predominate over residues 1798-1813 (DANQSSQADSTSIDRY).

Belongs to the glycosyltransferase group 1 family.

The enzyme catalyses [(1-&gt;3)-alpha-D-glucosyl](n) + UDP-alpha-D-glucose = [(1-&gt;3)-alpha-D-glucosyl](n+1) + UDP + H(+). The polypeptide is Cell wall alpha-1,3-glucan synthase mok12 (mok12) (Schizosaccharomyces pombe (strain 972 / ATCC 24843) (Fission yeast)).